Here is a 518-residue protein sequence, read N- to C-terminus: Pre-glycoprotein polyprotein GP complex (518 aa).

Residue Gly-2 is the site of N-myristoyl glycine; by host attachment. Over 2 to 17 (GQVIGFFQSLPNIINE) the chain is Extracellular. Residues 18–33 (ALNIALICVALIAILK) form a helical membrane-spanning segment. Over 34 to 58 (GIVNIWKSGLIQLFIFLILAGRSCS) the chain is Cytoplasmic. Cys-57 contributes to the Zn(2+) binding site. The Extracellular portion of the chain corresponds to 59–456 (HTFQIGRNHE…QGSTPLSLVD (398 aa)). 4 disulfides stabilise this stretch: Cys-87-Cys-258, Cys-303-Cys-316, Cys-325-Cys-334, and Cys-388-Cys-409. 5 N-linked (GlcNAc...) asparagine; by host glycosylation sites follow: Asn-90, Asn-112, Asn-127, Asn-180, and Asn-251. 4 N-linked (GlcNAc...) asparagine; by host glycosylation sites follow: Asn-389, Asn-397, Asn-414, and Asn-419. A helical membrane pass occupies residues 457 to 477 (LCFWSTLFYVTTLFAHLVGFP). The Cytoplasmic segment spans residues 478-518 (THRHILDGPCPKPHRLTKKGICSCGHFGIPGKPVRWVKRSR). Residues His-479, His-481, Cys-487, His-491, Cys-499, and Cys-501 each coordinate Zn(2+).

The protein belongs to the arenaviridae GPC protein family. Interacts with glycoprotein G2. Part of the GP complex (GP-C) together with glycoprotein G1 and glycoprotein G2. The GP-complex interacts with protein Z, which interacts with ribonucleocapsid; these interactions may induce virion budding. As to quaternary structure, homotrimer; disulfide-linked. In pre-fusion state, G1 homotrimers bind G2 homotrimers via ionic interactions. Part of the GP complex (GP-C) together with glycoprotein G2 and the stable signal peptide. The GP-complex interacts with protein Z, which interacts with ribonucleocapsid; these interactions may induce virion budding. In terms of assembly, homotrimer. Interacts with the stable signal peptide. In pre-fusion state, G2 homotrimers bind G1 homotrimers via ionic interactions. Part of the GP complex (GP-C) together with glycoprotein G1 and the stable signal peptide. Acidification in the endosome triggers rearrangements, which ultimately leads to a 6 helix bundle formed by the two heptad repeat domains (HR1 and HR2) in post-fusion state. The GP-complex interacts with protein Z, which interacts with ribonucleocapsid; these interactions may induce virion budding. Specific enzymatic cleavages in vivo yield mature proteins. GP-C polyprotein is cleaved in the endoplasmic reticulum by the host protease MBTPS1. Only cleaved glycoprotein is incorporated into virions. In terms of processing, the SSP remains stably associated with the GP complex following cleavage by signal peptidase and plays crucial roles in the trafficking of GP through the secretory pathway. Post-translationally, myristoylation is necessary for GP2-mediated fusion activity.

It localises to the virion membrane. Its subcellular location is the host endoplasmic reticulum membrane. The protein localises to the host Golgi apparatus membrane. It is found in the host cell membrane. In terms of biological role, functions as a cleaved signal peptide that is retained as the third component of the GP complex (GP-C). Helps to stabilize the spike complex in its native conformation. The SSP is required for efficient glycoprotein expression, post-translational maturation cleavage of G1 and G2, glycoprotein transport to the cell surface plasma membrane, formation of infectious virus particles, and acid pH-dependent glycoprotein-mediated cell fusion. Forms the virion spikes together with glycoprotein G2. The glycoprotein spike trimers are connected to the underlying matrix. Mediates virus attachment to host receptor alpha-dystroglycan DAG1. This attachment induces virion internalization predominantly through clathrin- and caveolin-independent endocytosis. Its function is as follows. Forms the virion spikes together with glycoprotein G1. The glycoprotein spike trimers are connected to the underlying matrix. Class I viral fusion protein that directs fusion of viral and host endosomal membranes, leading to delivery of the nucleocapsid into the cytoplasm. Membrane fusion is mediated by irreversible conformational changes induced by acidification. This Bolomys (OLVV) protein is Pre-glycoprotein polyprotein GP complex.